A 213-amino-acid polypeptide reads, in one-letter code: Protein GrpE (213 aa).

A compositionally biased stretch (basic and acidic residues) spans 1–23; the sequence is MSDEKKPEAETSESLQKREEKLA. Positions 1 to 43 are disordered; sequence MSDEKKPEAETSESLQKREEKLAETLASEPAAQGEAEDAAAAG. The segment covering 29–43 has biased composition (low complexity); it reads EPAAQGEAEDAAAAG.

The protein belongs to the GrpE family. Homodimer.

The protein resides in the cytoplasm. In terms of biological role, participates actively in the response to hyperosmotic and heat shock by preventing the aggregation of stress-denatured proteins, in association with DnaK and GrpE. It is the nucleotide exchange factor for DnaK and may function as a thermosensor. Unfolded proteins bind initially to DnaJ; upon interaction with the DnaJ-bound protein, DnaK hydrolyzes its bound ATP, resulting in the formation of a stable complex. GrpE releases ADP from DnaK; ATP binding to DnaK triggers the release of the substrate protein, thus completing the reaction cycle. Several rounds of ATP-dependent interactions between DnaJ, DnaK and GrpE are required for fully efficient folding. The sequence is that of Protein GrpE from Parvibaculum lavamentivorans (strain DS-1 / DSM 13023 / NCIMB 13966).